A 74-amino-acid chain; its full sequence is High-potential iron-sulfur protein isozyme 2 (74 aa).

The [4Fe-4S] cluster site is built by Cys-36, Cys-39, Cys-53, and Cys-67.

Homodimer.

Functionally, specific class of high-redox-potential 4Fe-4S ferredoxins. Functions in anaerobic electron transport in most purple and in some other photosynthetic bacteria and in at least one genus (Paracoccus) of halophilic, denitrifying bacteria. This chain is High-potential iron-sulfur protein isozyme 2, found in Ectothiorhodospira mobilis.